The sequence spans 270 residues: MDMYAVVGNPVSHSKSPKIHGMFAQQTGESLEYTAIQAPLDGFRETVESFFIGGGKGLNVTVPFKEQAWNIVSERSHRAELAGAVNTLLQRDGRLFGDNTDGEGLVRDICVNQGVALSGKKILLVGAGGAVKGVMAPLLDEGPASIVVANRTVSKAEDLARIFGRNGVVCARAFADLEGPFDVIINGTSASLAGDIPPLPDAVIASHTFTYDMMYSLRDTAFVAWAKARGAAHCCDGLGMLVEQAAAAFYLWRGVRPDTAPVLAGLRQGD.

Residues 14–16 and T61 contribute to the shikimate site; that span reads SKS. Residue K65 is the Proton acceptor of the active site. Residues N86 and D101 each contribute to the shikimate site. Residues 126-130, 150-155, and M213 each bind NADP(+); these read GAGGA and NRTVSK. Position 215 (Y215) interacts with shikimate. Position 237 (G237) interacts with NADP(+).

The protein belongs to the shikimate dehydrogenase family. As to quaternary structure, homodimer.

It carries out the reaction shikimate + NADP(+) = 3-dehydroshikimate + NADPH + H(+). The protein operates within metabolic intermediate biosynthesis; chorismate biosynthesis; chorismate from D-erythrose 4-phosphate and phosphoenolpyruvate: step 4/7. In terms of biological role, involved in the biosynthesis of the chorismate, which leads to the biosynthesis of aromatic amino acids. Catalyzes the reversible NADPH linked reduction of 3-dehydroshikimate (DHSA) to yield shikimate (SA). The chain is Shikimate dehydrogenase (NADP(+)) from Hahella chejuensis (strain KCTC 2396).